Reading from the N-terminus, the 158-residue chain is SsrA-binding protein (158 aa).

It belongs to the SmpB family.

The protein localises to the cytoplasm. In terms of biological role, required for rescue of stalled ribosomes mediated by trans-translation. Binds to transfer-messenger RNA (tmRNA), required for stable association of tmRNA with ribosomes. tmRNA and SmpB together mimic tRNA shape, replacing the anticodon stem-loop with SmpB. tmRNA is encoded by the ssrA gene; the 2 termini fold to resemble tRNA(Ala) and it encodes a 'tag peptide', a short internal open reading frame. During trans-translation Ala-aminoacylated tmRNA acts like a tRNA, entering the A-site of stalled ribosomes, displacing the stalled mRNA. The ribosome then switches to translate the ORF on the tmRNA; the nascent peptide is terminated with the 'tag peptide' encoded by the tmRNA and targeted for degradation. The ribosome is freed to recommence translation, which seems to be the essential function of trans-translation. The chain is SsrA-binding protein from Roseiflexus sp. (strain RS-1).